A 147-amino-acid polypeptide reads, in one-letter code: F420H(2)-dependent reductase Rv1155 (147 aa).

Coenzyme F420-(gamma-Glu)n contacts are provided by residues Gln32, Gln37, Ser50, 56-60 (AKTRN), 77-79 (WSY), and His138.

The protein belongs to the F420H(2)-dependent biliverdin reductase family. As to quaternary structure, homodimer.

In terms of biological role, F420H(2)-dependent reductase able to catalyze the reduction of biliverdin-IXalpha to bilirubin-IXalpha in vitro. However, kinetic parameters show that it is less efficient than the biliverdin reductase Rv2074 and suggest biliverdin-IXalpha is unlikely to be the native substrate of Rv1155, which probably catalyzes the reduction of an alternative molecule in vivo. Binds coenzyme F420, but does not bind FMN or other flavins. Cannot use pyridoxine 5'-phosphate, pyridoxamine 5'-phosphate, pyridoxal 5'-phosphate (PLP), the anti-tuberculosis drug PA-824 or aflatoxin analogs as substrates. The polypeptide is F420H(2)-dependent reductase Rv1155 (Mycobacterium tuberculosis (strain ATCC 25618 / H37Rv)).